Reading from the N-terminus, the 223-residue chain is Ribosomal RNA small subunit methyltransferase G (223 aa).

Residues G84, L89, 135 to 136, and R150 each bind S-adenosyl-L-methionine; that span reads VE.

The protein belongs to the methyltransferase superfamily. RNA methyltransferase RsmG family.

It is found in the cytoplasm. The enzyme catalyses guanosine(527) in 16S rRNA + S-adenosyl-L-methionine = N(7)-methylguanosine(527) in 16S rRNA + S-adenosyl-L-homocysteine. Its function is as follows. Specifically methylates the N7 position of guanine in position 527 of 16S rRNA. This chain is Ribosomal RNA small subunit methyltransferase G, found in Saccharophagus degradans (strain 2-40 / ATCC 43961 / DSM 17024).